The following is a 316-amino-acid chain: Annexin A13 (316 aa).

G2 carries N-myristoyl glycine lipidation. 4 Annexin repeats span residues 14–85 (FDVD…ALLD), 86–157 (RPSE…SLLQ), 169–241 (DLAG…TLVR), and 245–316 (DQEG…ALLH).

This sequence belongs to the annexin family. As to quaternary structure, monomer and homodimer. As to expression, detected in intestine, and at much lower levels also in kidney (at protein level).

It localises to the apical cell membrane. The protein resides in the cell membrane. The protein localises to the cytoplasmic vesicle. Its function is as follows. Binds to membranes enriched in phosphatidylserine or phosphatidylglycerol in a calcium-dependent manner. Half-maximal membrane binding requires about 60 uM calcium. Does not bind to membranes that lack phospholipids with an acidic headgroup. In terms of biological role, binds to membranes enriched in phosphatidylserine or phosphatidylglycerol in a calcium-dependent manner, but requires higher calcium levels for membrane binding than isoform A. Half-maximal membrane binding requires about 320 uM calcium. May play a role in vesicular traffic to the apical plasma membrane. This Canis lupus familiaris (Dog) protein is Annexin A13 (ANXA13).